Here is a 128-residue protein sequence, read N- to C-terminus: Con-Ins F2c (128 aa).

Residues Met1–Gly24 form the signal peptide. 4 cysteine pairs are disulfide-bonded: Cys29–Cys104, Cys41–Cys107, Cys53–Cys120, and Cys106–Cys111. A propeptide spans Leu59–Arg89 (c peptide). At Glu115 the chain carries 4-carboxyglutamate; partial. Ser127 is subject to Serine amide.

It belongs to the insulin family. Heterodimer of A and B chains; disulfide-linked. As to expression, expressed by the venom gland.

Its subcellular location is the secreted. Its function is as follows. This venom insulin facilitates prey capture by rapidly inducing hypoglycemic shock. Intraperitoneal injection of this peptide into zebrafish lowers blood glucose with the same potency than human insulin. In vivo, when applied to water, this peptide reduces overall locomotor activity of zebrafish larvae, observed as a significant decrease in the percentage of time spent swimming and movement frequency. This is Con-Ins F2c from Conus floridulus (Cone snail).